The primary structure comprises 172 residues: Cell division protein SepF (172 aa).

The segment at Arg18–Leu73 is disordered. The span at Glu22–Tyr40 shows a compositional bias: acidic residues. Basic and acidic residues predominate over residues Gln48–Ala59. The span at Arg60–Arg70 shows a compositional bias: basic residues.

This sequence belongs to the SepF family. In terms of assembly, homodimer. Interacts with FtsZ.

Its subcellular location is the cytoplasm. In terms of biological role, cell division protein that is part of the divisome complex and is recruited early to the Z-ring. Probably stimulates Z-ring formation, perhaps through the cross-linking of FtsZ protofilaments. Its function overlaps with FtsA. The polypeptide is Cell division protein SepF (Cutibacterium acnes (strain DSM 16379 / KPA171202) (Propionibacterium acnes)).